Reading from the N-terminus, the 273-residue chain is Signal recognition particle subunit SEC65 (273 aa).

Residues 25–71 (PSLRTPIAPKITPKVVRSQDQENPAFLPGTNNNSNSNNNSSNEKEQL) form a disordered region. Over residues 55–65 (NNNSNSNNNSS) the composition is skewed to low complexity.

In terms of assembly, fungal signal recognition particle (SRP) complex consists of a 7S RNA molecule (scR1) and at least six protein subunits: SRP72, SRP68, SRP54, SEC65, SRP21 and SRP14.

It localises to the cytoplasm. In terms of biological role, signal-recognition-particle (SRP) assembly has a crucial role in targeting secretory proteins to the rough endoplasmic reticulum (ER) membrane. SRP is required for the cotranslational protein translocation for ER import and preferentially recognizes strongly hydrophobic signal sequences. It is involved in targeting the nascent chain-ribosome (RNC) complex to the ER and is proposed to participate in the arrest of nascent chain elongation during membrane targeting. SEC65 is required for SRP integrity. This Saccharomyces cerevisiae (strain ATCC 204508 / S288c) (Baker's yeast) protein is Signal recognition particle subunit SEC65 (SEC65).